The following is a 399-amino-acid chain: Argininosuccinate synthase (399 aa).

Residues 10-18 (AYSGGVDTS) and A38 each bind ATP. L-citrulline is bound at residue Y89. G119 is a binding site for ATP. L-aspartate-binding residues include T121, N125, and D126. N125 lines the L-citrulline pocket. The L-citrulline site is built by R129, S177, S186, E262, and Y274.

This sequence belongs to the argininosuccinate synthase family. Type 1 subfamily. Homotetramer.

Its subcellular location is the cytoplasm. The catalysed reaction is L-citrulline + L-aspartate + ATP = 2-(N(omega)-L-arginino)succinate + AMP + diphosphate + H(+). Its pathway is amino-acid biosynthesis; L-arginine biosynthesis; L-arginine from L-ornithine and carbamoyl phosphate: step 2/3. In Picosynechococcus sp. (strain ATCC 27264 / PCC 7002 / PR-6) (Agmenellum quadruplicatum), this protein is Argininosuccinate synthase.